We begin with the raw amino-acid sequence, 306 residues long: Homoserine kinase (306 aa).

84–94 contacts ATP; it reads PAGLGLGSSGA.

The protein belongs to the GHMP kinase family. Homoserine kinase subfamily.

The protein localises to the cytoplasm. It carries out the reaction L-homoserine + ATP = O-phospho-L-homoserine + ADP + H(+). The protein operates within amino-acid biosynthesis; L-threonine biosynthesis; L-threonine from L-aspartate: step 4/5. Catalyzes the ATP-dependent phosphorylation of L-homoserine to L-homoserine phosphate. This Sulfolobus acidocaldarius (strain ATCC 33909 / DSM 639 / JCM 8929 / NBRC 15157 / NCIMB 11770) protein is Homoserine kinase.